Consider the following 766-residue polypeptide: Dolichyl pyrophosphate Glc1Man9GlcNAc2 alpha-1,3-glucosyltransferase (766 aa).

A run of 12 helical transmembrane segments spans residues 6 to 26, 60 to 80, 96 to 116, 156 to 176, 190 to 210, 228 to 248, 324 to 344, 350 to 370, 395 to 415, 423 to 443, 452 to 472, and 482 to 502; these read LVLA…PAYV, YPPF…FFGF, ILIF…AVCA, SIHF…LFFI, ILLN…FYYL, AISL…PFIH, PMGT…GLVI, ADFS…GYHV, ILIH…FTPF, ICVS…LMPL, VASW…HKWL, and LMAI…ALIW.

It belongs to the ALG6/ALG8 glucosyltransferase family.

It is found in the endoplasmic reticulum membrane. The enzyme catalyses an alpha-D-Glc-(1-&gt;3)-alpha-D-Man-(1-&gt;2)-alpha-D-Man-(1-&gt;2)-alpha-D-Man-(1-&gt;3)-[alpha-D-Man-(1-&gt;2)-alpha-D-Man-(1-&gt;3)-[alpha-D-Man-(1-&gt;2)-alpha-D-Man-(1-&gt;6)]-alpha-D-Man-(1-&gt;6)]-beta-D-Man-(1-&gt;4)-beta-D-GlcNAc-(1-&gt;4)-alpha-D-GlcNAc-diphospho-di-trans,poly-cis-dolichol + a di-trans,poly-cis-dolichyl beta-D-glucosyl phosphate = an alpha-D-Glc-(1-&gt;3)-alpha-D-Glc-(1-&gt;3)-alpha-D-Man-(1-&gt;2)-alpha-D-Man-(1-&gt;2)-alpha-D-Man-(1-&gt;3)-[alpha-D-Man-(1-&gt;2)-alpha-D-Man-(1-&gt;3)-[alpha-D-Man-(1-&gt;2)-alpha-D-Man-(1-&gt;6)]-alpha-D-Man-(1-&gt;6)]-beta-D-Man-(1-&gt;4)-beta-D-GlcNAc-(1-&gt;4)-alpha-D-GlcNAc-diphospho-di-trans,poly-cis-dolichol + a di-trans,poly-cis-dolichyl phosphate + H(+). It participates in protein modification; protein glycosylation. Its function is as follows. Dolichyl pyrophosphate Glc1Man9GlcNAc2 alpha-1,3-glucosyltransferase that operates in the biosynthetic pathway of dolichol-linked oligosaccharides, the glycan precursors employed in protein asparagine (N)-glycosylation. The assembly of dolichol-linked oligosaccharides begins on the cytosolic side of the endoplasmic reticulum membrane and finishes in its lumen. The sequential addition of sugars to dolichol pyrophosphate produces dolichol-linked oligosaccharides containing fourteen sugars, including two GlcNAcs, nine mannoses and three glucoses. Once assembled, the oligosaccharide is transferred from the lipid to nascent proteins by oligosaccharyltransferases. In the lumen of the endoplasmic reticulum, adds the second glucose residue from dolichyl phosphate glucose (Dol-P-Glc) onto the lipid-linked oligosaccharide intermediate Glc(1)Man(9)GlcNAc(2)-PP-Dol to produce Glc(2)Man(9)GlcNAc(2)-PP-Dol. This Caenorhabditis elegans protein is Dolichyl pyrophosphate Glc1Man9GlcNAc2 alpha-1,3-glucosyltransferase.